The chain runs to 180 residues: Ribulose bisphosphate carboxylase small subunit, chloroplastic (180 aa).

The N-terminal 56 residues, 1–56, are a transit peptide targeting the chloroplast; the sequence is MALISSAAVTTVNRASSAQANLVAPFTGLKSSAGFPVTKKTNNDITSIASNGGRVN.

Belongs to the RuBisCO small chain family. Heterohexadecamer of 8 large and 8 small subunits.

Its subcellular location is the plastid. It is found in the chloroplast. Functionally, ruBisCO catalyzes two reactions: the carboxylation of D-ribulose 1,5-bisphosphate, the primary event in carbon dioxide fixation, as well as the oxidative fragmentation of the pentose substrate. Both reactions occur simultaneously and in competition at the same active site. Although the small subunit is not catalytic it is essential for maximal activity. This is Ribulose bisphosphate carboxylase small subunit, chloroplastic from Medicago sativa (Alfalfa).